Reading from the N-terminus, the 299-residue chain is uncharacterized protein (299 aa).

6 helical membrane-spanning segments follow: residues 32-52 (FILLLIIIAAIPLLISYYLHL), 56-76 (SMIIFVVIYVGAALFIPSILY), 199-219 (LAIGFIILCGVIPAVAALLGA), 220-240 (YLIAVSGMLSGVAPIPPVKPE), 246-266 (FEIVQMGTAIIGALFAIPIFG), and 273-293 (FLISAVTMTIGVLAYYTILKF).

The protein resides in the cell membrane. This is an uncharacterized protein from Methanocaldococcus jannaschii (strain ATCC 43067 / DSM 2661 / JAL-1 / JCM 10045 / NBRC 100440) (Methanococcus jannaschii).